A 467-amino-acid polypeptide reads, in one-letter code: Serine/threonine-protein kinase AFC1 (467 aa).

The 329-residue stretch at 115 to 443 folds into the Protein kinase domain; that stretch reads YQILSKMGEG…AREALNHPFF (329 aa). Residues 121-129 and Lys-144 contribute to the ATP site; that span reads MGEGTFGQV. Asp-240 functions as the Proton acceptor in the catalytic mechanism. Residues 447 to 467 form a disordered region; it reads REQSIPPFNPNPHPFLYNQKN.

This sequence belongs to the protein kinase superfamily. CMGC Ser/Thr protein kinase family. Lammer subfamily.

The enzyme catalyses L-seryl-[protein] + ATP = O-phospho-L-seryl-[protein] + ADP + H(+). It carries out the reaction L-threonyl-[protein] + ATP = O-phospho-L-threonyl-[protein] + ADP + H(+). It catalyses the reaction L-tyrosyl-[protein] + ATP = O-phospho-L-tyrosyl-[protein] + ADP + H(+). Its function is as follows. Activator of yeast transcription factor, STE12. In Arabidopsis thaliana (Mouse-ear cress), this protein is Serine/threonine-protein kinase AFC1 (AFC1).